The chain runs to 537 residues: Putative cysteine ligase BshC (537 aa).

Residues 422–450 (IEKVEGMIEQQRRLNKDLLDEVAGNQNNI) adopt a coiled-coil conformation.

The protein belongs to the BshC family.

Involved in bacillithiol (BSH) biosynthesis. May catalyze the last step of the pathway, the addition of cysteine to glucosamine malate (GlcN-Mal) to generate BSH. This Staphylococcus aureus (strain Mu3 / ATCC 700698) protein is Putative cysteine ligase BshC.